We begin with the raw amino-acid sequence, 320 residues long: Olfactory receptor 52N1 (320 aa).

Over 1 to 27 (MSFLNGTSLTPASFILNGIPGLEDVHL) the chain is Extracellular. Asn-5 carries N-linked (GlcNAc...) asparagine glycosylation. Residues 28 to 48 (WISFPLCTMYSIAITGNFGLM) form a helical membrane-spanning segment. Residues 49-56 (YLIYCDEA) are Cytoplasmic-facing. Residues 57–77 (LHRPMYVFLALLSFTDVLMCT) form a helical membrane-spanning segment. Residues 78–101 (STLPNTLFILWFNLKEIDFKACLA) are Extracellular-facing. Cys-99 and Cys-191 form a disulfide bridge. A helical transmembrane segment spans residues 102–122 (QMFFVHTFTGMESGVLMLMAL). Topologically, residues 123–141 (DHCVAICFPLRYATILTNS) are cytoplasmic. A helical membrane pass occupies residues 142–162 (VIAKAGFLTFLRGVMLVIPST). At 163-198 (FLTKRLPYCKGNVIPHTYCDHMSVAKISCGNVRVNA) the chain is on the extracellular side. Residues 199–219 (IYGLIVALLIGGFDILCITIS) traverse the membrane as a helical segment. Over 220–239 (YTMILQAVVSLSSADARQKA) the chain is Cytoplasmic. A helical transmembrane segment spans residues 240–260 (FSTCTAHFCAIVLTYVPAFFT). Topologically, residues 261 to 276 (FFTHHFGGHTIPLHIH) are extracellular. A helical membrane pass occupies residues 277-297 (IIMANLYLLMPPTMNPIVYGV). Residues 298 to 320 (KTRQVRESVIRFFLKGKDNSHNF) lie on the Cytoplasmic side of the membrane.

Belongs to the G-protein coupled receptor 1 family.

It is found in the cell membrane. In terms of biological role, odorant receptor. This Homo sapiens (Human) protein is Olfactory receptor 52N1 (OR52N1).